The sequence spans 491 residues: Argininosuccinate lyase (491 aa).

The protein belongs to the lyase 1 family. Argininosuccinate lyase subfamily.

It is found in the cytoplasm. The enzyme catalyses 2-(N(omega)-L-arginino)succinate = fumarate + L-arginine. The protein operates within amino-acid biosynthesis; L-arginine biosynthesis; L-arginine from L-ornithine and carbamoyl phosphate: step 3/3. This Methanosarcina mazei (strain ATCC BAA-159 / DSM 3647 / Goe1 / Go1 / JCM 11833 / OCM 88) (Methanosarcina frisia) protein is Argininosuccinate lyase.